A 622-amino-acid chain; its full sequence is uncharacterized protein (622 aa).

The segment covering 157-166 (LKESPLRDQQ) has biased composition (basic and acidic residues). Residues 157 to 238 (LKESPLRDQQ…GLPDHNSISE (82 aa)) form a disordered region.

This is an uncharacterized protein from Homo sapiens (Human).